A 600-amino-acid chain; its full sequence is Elongation factor 4 (600 aa).

Positions 5 to 187 (KYIRNFSIIA…AIVNKLPPPK (183 aa)) constitute a tr-type G domain. Residues 17–22 (DHGKST) and 134–137 (NKLD) each bind GTP.

The protein belongs to the TRAFAC class translation factor GTPase superfamily. Classic translation factor GTPase family. LepA subfamily.

Its subcellular location is the cell inner membrane. It carries out the reaction GTP + H2O = GDP + phosphate + H(+). Its function is as follows. Required for accurate and efficient protein synthesis under certain stress conditions. May act as a fidelity factor of the translation reaction, by catalyzing a one-codon backward translocation of tRNAs on improperly translocated ribosomes. Back-translocation proceeds from a post-translocation (POST) complex to a pre-translocation (PRE) complex, thus giving elongation factor G a second chance to translocate the tRNAs correctly. Binds to ribosomes in a GTP-dependent manner. The polypeptide is Elongation factor 4 (Rickettsia africae (strain ESF-5)).